Here is a 624-residue protein sequence, read N- to C-terminus: NADPH-dependent diflavin oxidoreductase 1 (624 aa).

Positions isoleucine 6–isoleucine 168 constitute a Flavodoxin-like domain. FMN contacts are provided by residues serine 12–alanine 17, serine 59–glycine 62, leucine 106–asparagine 115, and glutamate 142. Residues glutamate 226–aspartate 474 enclose the FAD-binding FR-type domain. Residues arginine 384, arginine 414–serine 417, and glycine 446–threonine 449 contribute to the FAD site. NADP(+) contacts are provided by residues serine 539–arginine 540 and alanine 548–glutamine 552. Position 624 (tryptophan 624) interacts with FAD.

This sequence belongs to the NADPH-dependent diflavin oxidoreductase NDOR1 family. It in the N-terminal section; belongs to the flavodoxin family. The protein in the C-terminal section; belongs to the flavoprotein pyridine nucleotide cytochrome reductase family. In terms of assembly, interacts with DRE2; as part of the cytosolic iron-sulfur (Fe-S) protein assembly (CIA) machinery. Requires FAD as cofactor. It depends on FMN as a cofactor.

It localises to the cytoplasm. The protein localises to the mitochondrion. The enzyme catalyses 2 oxidized [2Fe-2S]-[protein] + NADPH = 2 reduced [2Fe-2S]-[protein] + NADP(+) + H(+). Its function is as follows. NADPH-dependent reductase which is a central component of the cytosolic iron-sulfur (Fe-S) protein assembly (CIA) machinery. Transfers electrons from NADPH via its FAD and FMN prosthetic groups to the [2Fe-2S] cluster of DRE2, another key component of the CIA machinery. In turn, this reduced cluster provides electrons for assembly of cytosolic iron-sulfur cluster proteins. Positively controls H(2)O(2)-induced cell death. The chain is NADPH-dependent diflavin oxidoreductase 1 from Kluyveromyces lactis (strain ATCC 8585 / CBS 2359 / DSM 70799 / NBRC 1267 / NRRL Y-1140 / WM37) (Yeast).